The primary structure comprises 102 residues: Protein transport protein sec61 subunit beta (102 aa).

Over residues 1–15 (MSSTKASGSVKNSAA) the composition is skewed to polar residues. Positions 1–53 (MSSTKASGSVKNSAASAPGGPKSQIRRRAAVEKNTKESNSGPAGARAAGAPGS) are disordered. Topologically, residues 1–72 (MSSTKASGSV…DEASGFKVDP (72 aa)) are cytoplasmic. Residues 41-52 (GPAGARAAGAPG) are compositionally biased toward low complexity. Residues 73 to 93 (VVVMVLSVGFIASVFLLHIVA) form a helical membrane-spanning segment.

It belongs to the SEC61-beta family. As to quaternary structure, heterotrimeric complex composed of SEC61, SBH1 and SSS1.

It is found in the endoplasmic reticulum membrane. Necessary for protein translocation in the endoplasmic reticulum. In Schizosaccharomyces pombe (strain 972 / ATCC 24843) (Fission yeast), this protein is Protein transport protein sec61 subunit beta (sbh1).